The primary structure comprises 195 residues: Glycerol-3-phosphate acyltransferase (195 aa).

5 helical membrane passes run 7–27, 52–72, 80–100, 113–133, and 147–167; these read IFIL…SYVI, LALL…AIAQ, ILFL…YLFF, LIFI…ICFL, and LIAL…IFTI.

It belongs to the PlsY family. Probably interacts with PlsX.

It is found in the cell inner membrane. It carries out the reaction an acyl phosphate + sn-glycerol 3-phosphate = a 1-acyl-sn-glycero-3-phosphate + phosphate. Its pathway is lipid metabolism; phospholipid metabolism. Catalyzes the transfer of an acyl group from acyl-phosphate (acyl-PO(4)) to glycerol-3-phosphate (G3P) to form lysophosphatidic acid (LPA). This enzyme utilizes acyl-phosphate as fatty acyl donor, but not acyl-CoA or acyl-ACP. This Ehrlichia ruminantium (strain Welgevonden) protein is Glycerol-3-phosphate acyltransferase.